Here is a 238-residue protein sequence, read N- to C-terminus: Purine nucleoside phosphorylase DeoD-type (238 aa).

Histidine 5 is an a purine D-ribonucleoside binding site. Phosphate is bound by residues glycine 21, arginine 25, arginine 44, and 88–91 (RIGT). A purine D-ribonucleoside-binding positions include 180-182 (DME) and 204-205 (SD). Aspartate 205 acts as the Proton donor in catalysis.

This sequence belongs to the PNP/UDP phosphorylase family. Homohexamer; trimer of homodimers.

The enzyme catalyses a purine D-ribonucleoside + phosphate = a purine nucleobase + alpha-D-ribose 1-phosphate. It carries out the reaction a purine 2'-deoxy-D-ribonucleoside + phosphate = a purine nucleobase + 2-deoxy-alpha-D-ribose 1-phosphate. Functionally, catalyzes the reversible phosphorolytic breakdown of the N-glycosidic bond in the beta-(deoxy)ribonucleoside molecules, with the formation of the corresponding free purine bases and pentose-1-phosphate. The chain is Purine nucleoside phosphorylase DeoD-type from Buchnera aphidicola subsp. Baizongia pistaciae (strain Bp).